Reading from the N-terminus, the 358-residue chain is 3-isopropylmalate dehydrogenase (358 aa).

75 to 88 serves as a coordination point for NAD(+); the sequence is GPKWETLPPEKQPE. Residues R96, R106, R135, and D225 each coordinate substrate. 3 residues coordinate Mg(2+): D225, D249, and D253. 283-295 provides a ligand contact to NAD(+); that stretch reads GSAPDIAGKGVAN.

The protein belongs to the isocitrate and isopropylmalate dehydrogenases family. LeuB type 1 subfamily. In terms of assembly, homodimer. Requires Mg(2+) as cofactor. The cofactor is Mn(2+).

The protein localises to the cytoplasm. The catalysed reaction is (2R,3S)-3-isopropylmalate + NAD(+) = 4-methyl-2-oxopentanoate + CO2 + NADH. Its pathway is amino-acid biosynthesis; L-leucine biosynthesis; L-leucine from 3-methyl-2-oxobutanoate: step 3/4. In terms of biological role, catalyzes the oxidation of 3-carboxy-2-hydroxy-4-methylpentanoate (3-isopropylmalate) to 3-carboxy-4-methyl-2-oxopentanoate. The product decarboxylates to 4-methyl-2 oxopentanoate. This Leptospira interrogans serogroup Icterohaemorrhagiae serovar copenhageni (strain Fiocruz L1-130) protein is 3-isopropylmalate dehydrogenase.